The primary structure comprises 547 residues: Probable bifunctional tRNA threonylcarbamoyladenosine biosynthesis protein (547 aa).

The kae1 stretch occupies residues 1–329 (MKKTFILGIE…FRTDDVKVTW (329 aa)). Positions 113, 117, and 134 each coordinate Fe cation. Residues 134–138 (YVSGA), Asp166, Gly179, Glu183, and Asn262 contribute to the L-threonylcarbamoyladenylate site. Asp290 is a binding site for Fe cation. Residues 340 to 547 (EISPETFFRM…EEIKKRARYA (208 aa)) enclose the Protein kinase domain. ATP is bound by residues 355-363 (LDNGAEAVV) and Lys377. The active-site Proton acceptor; for kinase activity is the Asp464.

The protein in the N-terminal section; belongs to the KAE1 / TsaD family. This sequence in the C-terminal section; belongs to the protein kinase superfamily. Tyr protein kinase family. BUD32 subfamily. Component of the KEOPS complex that consists of Kae1, Bud32, Cgi121 and Pcc1; the whole complex dimerizes. Fe(2+) is required as a cofactor.

The protein resides in the cytoplasm. It catalyses the reaction L-seryl-[protein] + ATP = O-phospho-L-seryl-[protein] + ADP + H(+). It carries out the reaction L-threonyl-[protein] + ATP = O-phospho-L-threonyl-[protein] + ADP + H(+). The catalysed reaction is L-threonylcarbamoyladenylate + adenosine(37) in tRNA = N(6)-L-threonylcarbamoyladenosine(37) in tRNA + AMP + H(+). In terms of biological role, required for the formation of a threonylcarbamoyl group on adenosine at position 37 (t(6)A37) in tRNAs that read codons beginning with adenine. Is a component of the KEOPS complex that is probably involved in the transfer of the threonylcarbamoyl moiety of threonylcarbamoyl-AMP (TC-AMP) to the N6 group of A37. The Kae1 domain likely plays a direct catalytic role in this reaction. The Bud32 domain probably displays kinase activity that regulates Kae1 function. The polypeptide is Probable bifunctional tRNA threonylcarbamoyladenosine biosynthesis protein (Methanosarcina mazei (strain ATCC BAA-159 / DSM 3647 / Goe1 / Go1 / JCM 11833 / OCM 88) (Methanosarcina frisia)).